The primary structure comprises 517 residues: Putative thymidine phosphorylase (517 aa).

The protein belongs to the thymidine/pyrimidine-nucleoside phosphorylase family. Type 2 subfamily.

The catalysed reaction is thymidine + phosphate = 2-deoxy-alpha-D-ribose 1-phosphate + thymine. This is Putative thymidine phosphorylase from Legionella pneumophila subsp. pneumophila (strain Philadelphia 1 / ATCC 33152 / DSM 7513).